The following is a 184-amino-acid chain: Photosystem I assembly protein Ycf4 (184 aa).

2 helical membrane-spanning segments follow: residues 22 to 42 (FCWA…GISS) and 57 to 77 (ILFF…LFIS).

Belongs to the Ycf4 family.

The protein localises to the plastid. The protein resides in the chloroplast thylakoid membrane. Functionally, seems to be required for the assembly of the photosystem I complex. In Illicium oligandrum (Star anise), this protein is Photosystem I assembly protein Ycf4.